Reading from the N-terminus, the 455-residue chain is Ribulose bisphosphate carboxylase large chain (455 aa).

The residue at position 5 (Lys-5) is an N6,N6,N6-trimethyllysine. Residues Asn-114 and Thr-164 each contribute to the substrate site. Lys-166 acts as the Proton acceptor in catalysis. Lys-168 contributes to the substrate binding site. 3 residues coordinate Mg(2+): Lys-192, Asp-194, and Glu-195. Lys-192 bears the N6-carboxylysine mark. Catalysis depends on His-285, which acts as the Proton acceptor. Substrate contacts are provided by Arg-286, His-318, and Ser-370.

This sequence belongs to the RuBisCO large chain family. Type I subfamily. As to quaternary structure, heterohexadecamer of 8 large chains and 8 small chains; disulfide-linked. The disulfide link is formed within the large subunit homodimers. Mg(2+) is required as a cofactor. Post-translationally, the disulfide bond which can form in the large chain dimeric partners within the hexadecamer appears to be associated with oxidative stress and protein turnover.

It is found in the plastid. The protein localises to the chloroplast. The enzyme catalyses 2 (2R)-3-phosphoglycerate + 2 H(+) = D-ribulose 1,5-bisphosphate + CO2 + H2O. It carries out the reaction D-ribulose 1,5-bisphosphate + O2 = 2-phosphoglycolate + (2R)-3-phosphoglycerate + 2 H(+). RuBisCO catalyzes two reactions: the carboxylation of D-ribulose 1,5-bisphosphate, the primary event in carbon dioxide fixation, as well as the oxidative fragmentation of the pentose substrate in the photorespiration process. Both reactions occur simultaneously and in competition at the same active site. This Lupinus latifolius (Broad-leaved lupine) protein is Ribulose bisphosphate carboxylase large chain.